We begin with the raw amino-acid sequence, 440 residues long: Ribosomal protein uS12 methylthiotransferase RimO (440 aa).

Residues 8–124 (TSVFLLSLGC…VLDALGARYH (117 aa)) enclose the MTTase N-terminal domain. Positions 17, 53, 87, 148, 152, and 155 each coordinate [4Fe-4S] cluster. The Radical SAM core domain occupies 134 to 363 (LTPPHSSYLK…MELQEEIARK (230 aa)). The region spanning 366-437 (EAFVGSLMTV…AYELHGTVES (72 aa)) is the TRAM domain.

This sequence belongs to the methylthiotransferase family. RimO subfamily. It depends on [4Fe-4S] cluster as a cofactor.

The protein localises to the cytoplasm. It carries out the reaction L-aspartate(89)-[ribosomal protein uS12]-hydrogen + (sulfur carrier)-SH + AH2 + 2 S-adenosyl-L-methionine = 3-methylsulfanyl-L-aspartate(89)-[ribosomal protein uS12]-hydrogen + (sulfur carrier)-H + 5'-deoxyadenosine + L-methionine + A + S-adenosyl-L-homocysteine + 2 H(+). Its function is as follows. Catalyzes the methylthiolation of an aspartic acid residue of ribosomal protein uS12. This is Ribosomal protein uS12 methylthiotransferase RimO from Chlorobium luteolum (strain DSM 273 / BCRC 81028 / 2530) (Pelodictyon luteolum).